The primary structure comprises 175 residues: Alpha-crystallin B chain (175 aa).

Methionine 1 carries the post-translational modification N-acetylmethionine. Serine 19 carries the post-translational modification Phosphoserine. Serine 41 carries O-linked (GlcNAc) serine glycosylation. Residues serine 45 and serine 59 each carry the phosphoserine modification. Residues 56–164 (RAPSWIDTGL…PERTIPITRE (109 aa)) form the sHSP domain. Histidine 83 is a binding site for Zn(2+). Lysine 92 is modified (N6-acetyllysine). Zn(2+) contacts are provided by histidine 104, glutamate 106, histidine 111, and histidine 119. The segment at 139-175 (SDGVLTMNGPRKQASGPERTIPITREEKPAVTAAPKK) is disordered. The residue at position 166 (lysine 166) is an N6-acetyllysine. The O-linked (GlcNAc) threonine glycan is linked to threonine 170.

The protein belongs to the small heat shock protein (HSP20) family. Heteromer composed of three CRYAA and one CRYAB subunits. Aggregates with homologous proteins, including the small heat shock protein HSPB1, to form large heteromeric complexes. Inter-subunit bridging via zinc ions enhances stability, which is crucial as there is no protein turn over in the lens. Interacts with HSPBAP1 and TTN/titin. Interacts with TMEM109; in the cellular response to DNA damage. Interacts with DES; binds rapidly during early stages of DES filament assembly and a reduced binding seen in the later stages. Interacts with ATP6V1A and with MTOR, forming a ternary complex.

Its subcellular location is the cytoplasm. It is found in the nucleus. It localises to the secreted. The protein localises to the lysosome. Functionally, may contribute to the transparency and refractive index of the lens. Has chaperone-like activity, preventing aggregation of various proteins under a wide range of stress conditions. In lens epithelial cells, stabilizes the ATP6V1A protein, preventing its degradation by the proteasome. This Ovis aries (Sheep) protein is Alpha-crystallin B chain (CRYAB).